A 466-amino-acid polypeptide reads, in one-letter code: tRNA modification GTPase MnmE (466 aa).

(6S)-5-formyl-5,6,7,8-tetrahydrofolate-binding residues include Arg22, Glu87, and Arg126. In terms of domain architecture, TrmE-type G spans Gly222–Tyr382. Position 232 (Asn232) interacts with K(+). Residues Asn232 to Ser237, Thr251 to Thr257, and Asp276 to Gly279 contribute to the GTP site. Ser236 contacts Mg(2+). K(+) contacts are provided by Thr251, Ile253, and Thr256. Position 257 (Thr257) interacts with Mg(2+). Lys466 lines the (6S)-5-formyl-5,6,7,8-tetrahydrofolate pocket.

This sequence belongs to the TRAFAC class TrmE-Era-EngA-EngB-Septin-like GTPase superfamily. TrmE GTPase family. As to quaternary structure, homodimer. Heterotetramer of two MnmE and two MnmG subunits. The cofactor is K(+).

The protein localises to the cytoplasm. Functionally, exhibits a very high intrinsic GTPase hydrolysis rate. Involved in the addition of a carboxymethylaminomethyl (cmnm) group at the wobble position (U34) of certain tRNAs, forming tRNA-cmnm(5)s(2)U34. The protein is tRNA modification GTPase MnmE of Heliobacterium modesticaldum (strain ATCC 51547 / Ice1).